The sequence spans 339 residues: MDGLETALPSLTDNASLAYSEQCGQETPLENMLFACFYLLDFILAFVGNALALWLFIWDHKSGTPANVFLMHLAVADLSCVLVLPTRLVYHFSGNHWPFGEIPCRLTGFLFYLNMYASIYFLTCISADRFLAIVHPVKSLKLRRPLYAHLACAFLWIVVAVAMAPLLVSPQTVQTNHTVVCLQLYREKASHHALASLAVAFTFPFITTVTCYLLIIRSLRQGPRIEKHLKNKAVRMIAMVLAIFLICFVPYHIHRSVYVLHYRGGGTSCSAQRALALGNRITSCLTSLNGALDPVMYFFVAEKFRHALCNLLCSKRLTGPPPSFEGKTNESSLSARSEL.

Residues 1–36 (MDGLETALPSLTDNASLAYSEQCGQETPLENMLFAC) lie on the Extracellular side of the membrane. The N-linked (GlcNAc...) asparagine glycan is linked to Asn14. The helical transmembrane segment at 37 to 57 (FYLLDFILAFVGNALALWLFI) threads the bilayer. Residues 58–64 (WDHKSGT) are Cytoplasmic-facing. A helical membrane pass occupies residues 65–85 (PANVFLMHLAVADLSCVLVLP). At 86–105 (TRLVYHFSGNHWPFGEIPCR) the chain is on the extracellular side. A disulfide bridge links Cys104 with Cys181. Residues 106–126 (LTGFLFYLNMYASIYFLTCIS) traverse the membrane as a helical segment. Residues 127–147 (ADRFLAIVHPVKSLKLRRPLY) lie on the Cytoplasmic side of the membrane. A helical transmembrane segment spans residues 148–168 (AHLACAFLWIVVAVAMAPLLV). The Extracellular portion of the chain corresponds to 169–195 (SPQTVQTNHTVVCLQLYREKASHHALA). N-linked (GlcNAc...) asparagine glycosylation is present at Asn176. Residues 196–216 (SLAVAFTFPFITTVTCYLLII) traverse the membrane as a helical segment. Residues 217–232 (RSLRQGPRIEKHLKNK) are Cytoplasmic-facing. A helical membrane pass occupies residues 233–253 (AVRMIAMVLAIFLICFVPYHI). The Extracellular segment spans residues 254–280 (HRSVYVLHYRGGGTSCSAQRALALGNR). Residues 281 to 301 (ITSCLTSLNGALDPVMYFFVA) traverse the membrane as a helical segment. At 302 to 339 (EKFRHALCNLLCSKRLTGPPPSFEGKTNESSLSARSEL) the chain is on the cytoplasmic side.

This sequence belongs to the G-protein coupled receptor 1 family. As to expression, expressed in brain, kidney, and heart. Highest level in brain.

It localises to the cell membrane. Dual specificity receptor for uracil nucleotides and cysteinyl leukotrienes (CysLTs). Signals through G(i) and inhibition of adenylyl cyclase. May mediate brain damage by nucleotides and CysLTs following ischemia. The polypeptide is Uracil nucleotide/cysteinyl leukotriene receptor (Rattus norvegicus (Rat)).